The sequence spans 411 residues: Lissencephaly-1 homolog (411 aa).

The LisH domain maps to 9–41 (QREELNQAIADYLGSNGYSSALEAFRKEADISG). A coiled-coil region spans residues 56–83 (TSVIRLQKKVMELEAKLSEAEKEVIEGA). WD repeat units follow at residues 106 to 147 (GHRA…RSLK), 149 to 187 (HTSS…DCVK), 191 to 230 (GHDH…CVKT), 233 to 272 (GHRE…CKAE), 275 to 334 (AHDH…CLFV), 337 to 376 (GHDN…FMKT), and 379 to 411 (AHQH…WECR).

Belongs to the WD repeat LIS1/nudF family.

The protein resides in the cytoplasm. Its subcellular location is the cytoskeleton. It is found in the microtubule organizing center. It localises to the centrosome. Its function is as follows. Positively regulates the activity of the minus-end directed microtubule motor protein dynein. May enhance dynein-mediated microtubule sliding by targeting dynein to the microtubule plus end. Required for several dynein- and microtubule-dependent processes. The chain is Lissencephaly-1 homolog from Glossina morsitans morsitans (Savannah tsetse fly).